Reading from the N-terminus, the 262-residue chain is 3-methyl-2-oxobutanoate hydroxymethyltransferase (262 aa).

Mg(2+)-binding residues include Asp-31 and Asp-70. 3-methyl-2-oxobutanoate is bound by residues 31–32 (DS), Asp-70, and Lys-99. Glu-101 lines the Mg(2+) pocket. The active-site Proton acceptor is the Glu-168.

Belongs to the PanB family. As to quaternary structure, homodecamer; pentamer of dimers. The cofactor is Mg(2+).

The protein resides in the cytoplasm. It catalyses the reaction 3-methyl-2-oxobutanoate + (6R)-5,10-methylene-5,6,7,8-tetrahydrofolate + H2O = 2-dehydropantoate + (6S)-5,6,7,8-tetrahydrofolate. It participates in cofactor biosynthesis; coenzyme A biosynthesis. Its function is as follows. Catalyzes the reversible reaction in which hydroxymethyl group from 5,10-methylenetetrahydrofolate is transferred onto alpha-ketoisovalerate to form ketopantoate. The polypeptide is 3-methyl-2-oxobutanoate hydroxymethyltransferase (Cenarchaeum symbiosum (strain A)).